The primary structure comprises 328 residues: tRNA dimethylallyltransferase (328 aa).

19 to 26 is a binding site for ATP; that stretch reads GPTASGKT. 21–26 is a substrate binding site; it reads TASGKT. Interaction with substrate tRNA stretches follow at residues 50–53, 174–178, and 257–262; these read DSAL, QRIQR, and RCVGYR.

The protein belongs to the IPP transferase family. In terms of assembly, monomer. It depends on Mg(2+) as a cofactor.

It catalyses the reaction adenosine(37) in tRNA + dimethylallyl diphosphate = N(6)-dimethylallyladenosine(37) in tRNA + diphosphate. Catalyzes the transfer of a dimethylallyl group onto the adenine at position 37 in tRNAs that read codons beginning with uridine, leading to the formation of N6-(dimethylallyl)adenosine (i(6)A). The protein is tRNA dimethylallyltransferase of Leptothrix cholodnii (strain ATCC 51168 / LMG 8142 / SP-6) (Leptothrix discophora (strain SP-6)).